Consider the following 209-residue polypeptide: Large ribosomal subunit protein uL3 (209 aa).

It belongs to the universal ribosomal protein uL3 family. As to quaternary structure, part of the 50S ribosomal subunit. Forms a cluster with proteins L14 and L19.

Its function is as follows. One of the primary rRNA binding proteins, it binds directly near the 3'-end of the 23S rRNA, where it nucleates assembly of the 50S subunit. This chain is Large ribosomal subunit protein uL3, found in Pelobacter propionicus (strain DSM 2379 / NBRC 103807 / OttBd1).